We begin with the raw amino-acid sequence, 368 residues long: Agmatine deiminase (368 aa).

Residue C357 is the Amidino-cysteine intermediate of the active site.

The protein belongs to the agmatine deiminase family. Homodimer.

The enzyme catalyses agmatine + H2O = N-carbamoylputrescine + NH4(+). It functions in the pathway amine and polyamine biosynthesis; putrescine biosynthesis via agmatine pathway; N-carbamoylputrescine from agmatine: step 1/1. Its function is as follows. Mediates the hydrolysis of agmatine into N-carbamoylputrescine in the arginine decarboxylase (ADC) pathway of putrescine biosynthesis, a basic polyamine. The polypeptide is Agmatine deiminase (Pseudomonas putida (strain ATCC 47054 / DSM 6125 / CFBP 8728 / NCIMB 11950 / KT2440)).